The chain runs to 355 residues: Small ribosomal subunit biogenesis GTPase RsgA 1 (355 aa).

One can recognise a CP-type G domain in the interval 103 to 262; that stretch reads GRVADRQAIA…LIDTPGVREF (160 aa). GTP contacts are provided by residues 152-155 and 204-212; these read NKAD and GSSGVGKSS. C285, C290, H292, and C298 together coordinate Zn(2+).

This sequence belongs to the TRAFAC class YlqF/YawG GTPase family. RsgA subfamily. In terms of assembly, monomer. Associates with 30S ribosomal subunit, binds 16S rRNA. Zn(2+) is required as a cofactor.

It localises to the cytoplasm. Its function is as follows. One of several proteins that assist in the late maturation steps of the functional core of the 30S ribosomal subunit. Helps release RbfA from mature subunits. May play a role in the assembly of ribosomal proteins into the subunit. Circularly permuted GTPase that catalyzes slow GTP hydrolysis, GTPase activity is stimulated by the 30S ribosomal subunit. This Bacteroides thetaiotaomicron (strain ATCC 29148 / DSM 2079 / JCM 5827 / CCUG 10774 / NCTC 10582 / VPI-5482 / E50) protein is Small ribosomal subunit biogenesis GTPase RsgA 1.